Reading from the N-terminus, the 59-residue chain is Potassium channel toxin alpha-KTx 4.7 (59 aa).

An N-terminal signal peptide occupies residues methionine 1–glutamine 22. Intrachain disulfides connect cysteine 29–cysteine 50, cysteine 35–cysteine 55, and cysteine 39–cysteine 57. The tract at residues glycine 48 to cysteine 55 is interaction with Ca(2+)-activated K(+) channels.

It belongs to the short scorpion toxin superfamily. Potassium channel inhibitor family. Alpha-KTx 04 subfamily. In terms of tissue distribution, expressed by the venom gland.

It localises to the secreted. In terms of biological role, potently blocks Kv1.1/KCNA1 (85%), Kv1.2/KCNA2 (91%), Kv1.3/KCNA3 (89%), Kv1.6/KCNA6 (94%), and Shaker (97%). This chain is Potassium channel toxin alpha-KTx 4.7, found in Tityus stigmurus (Brazilian scorpion).